The sequence spans 166 residues: Ubiquitin-conjugating enzyme E2 13 (166 aa).

The UBC core domain maps to 4-164 (QACLLLQKQL…VSRCVRKSQE (161 aa)). C89 functions as the Glycyl thioester intermediate in the catalytic mechanism.

This sequence belongs to the ubiquitin-conjugating enzyme family.

The catalysed reaction is S-ubiquitinyl-[E1 ubiquitin-activating enzyme]-L-cysteine + [E2 ubiquitin-conjugating enzyme]-L-cysteine = [E1 ubiquitin-activating enzyme]-L-cysteine + S-ubiquitinyl-[E2 ubiquitin-conjugating enzyme]-L-cysteine.. It participates in protein modification; protein ubiquitination. Its function is as follows. Accepts the ubiquitin from the E1 complex and catalyzes its covalent attachment to other proteins. Involved in the formation of multiubiquitin chains. Signal the protein for selective degradation. This is Ubiquitin-conjugating enzyme E2 13 (UBC13) from Arabidopsis thaliana (Mouse-ear cress).